The primary structure comprises 418 residues: Gamma-glutamyl phosphate reductase (418 aa).

Belongs to the gamma-glutamyl phosphate reductase family.

Its subcellular location is the cytoplasm. The enzyme catalyses L-glutamate 5-semialdehyde + phosphate + NADP(+) = L-glutamyl 5-phosphate + NADPH + H(+). The protein operates within amino-acid biosynthesis; L-proline biosynthesis; L-glutamate 5-semialdehyde from L-glutamate: step 2/2. Its function is as follows. Catalyzes the NADPH-dependent reduction of L-glutamate 5-phosphate into L-glutamate 5-semialdehyde and phosphate. The product spontaneously undergoes cyclization to form 1-pyrroline-5-carboxylate. The chain is Gamma-glutamyl phosphate reductase from Lacticaseibacillus paracasei (strain ATCC 334 / BCRC 17002 / CCUG 31169 / CIP 107868 / KCTC 3260 / NRRL B-441) (Lactobacillus paracasei).